A 98-amino-acid polypeptide reads, in one-letter code: ESAT-6-like protein EsxK (98 aa).

The protein belongs to the WXG100 family. CFP-10 subfamily. As to quaternary structure, strongly interacts with EsxL to form a heterodimeric complex under reducing conditions.

Its subcellular location is the secreted. The protein is ESAT-6-like protein EsxK of Mycobacterium tuberculosis (strain CDC 1551 / Oshkosh).